Consider the following 467-residue polypeptide: Xanthan biosynthesis protein XanB (467 aa).

Belongs to the mannose-6-phosphate isomerase type 2 family.

The enzyme catalyses D-mannose 6-phosphate = D-fructose 6-phosphate. It catalyses the reaction alpha-D-mannose 1-phosphate + GTP + H(+) = GDP-alpha-D-mannose + diphosphate. The protein operates within nucleotide-sugar biosynthesis; GDP-alpha-D-mannose biosynthesis; GDP-alpha-D-mannose from alpha-D-mannose 1-phosphate (GTP route): step 1/1. Its pathway is nucleotide-sugar biosynthesis; GDP-alpha-D-mannose biosynthesis; alpha-D-mannose 1-phosphate from D-fructose 6-phosphate: step 1/2. Involved in xanthan production. In Xanthomonas campestris pv. campestris (strain B100), this protein is Xanthan biosynthesis protein XanB (xanB).